The sequence spans 428 residues: Histidinol dehydrogenase (428 aa).

3 residues coordinate substrate: serine 234, glutamine 256, and histidine 259. Positions 256 and 259 each coordinate Zn(2+). Catalysis depends on proton acceptor residues glutamate 323 and histidine 324. Residues histidine 324, aspartate 357, glutamate 411, and histidine 416 each coordinate substrate. Aspartate 357 contacts Zn(2+). Histidine 416 is a Zn(2+) binding site.

Belongs to the histidinol dehydrogenase family. Zn(2+) is required as a cofactor.

The enzyme catalyses L-histidinol + 2 NAD(+) + H2O = L-histidine + 2 NADH + 3 H(+). Its pathway is amino-acid biosynthesis; L-histidine biosynthesis; L-histidine from 5-phospho-alpha-D-ribose 1-diphosphate: step 9/9. In terms of biological role, catalyzes the sequential NAD-dependent oxidations of L-histidinol to L-histidinaldehyde and then to L-histidine. The protein is Histidinol dehydrogenase of Campylobacter jejuni (strain RM1221).